A 95-amino-acid polypeptide reads, in one-letter code: Integration host factor subunit beta (95 aa).

This sequence belongs to the bacterial histone-like protein family. Heterodimer of an alpha and a beta chain.

In terms of biological role, this protein is one of the two subunits of integration host factor, a specific DNA-binding protein that functions in genetic recombination as well as in transcriptional and translational control. This Paracoccus denitrificans (strain Pd 1222) protein is Integration host factor subunit beta.